The primary structure comprises 593 residues: MTADSALYIPPYKADDQDIVVELNSRFGAETFTVQPTRTGMPVLWVPRERLIEVLTFLRQVPKPYVMLYDLHGVDERLRTHRRGLPNADFSVFYHLMSLERNSDVMIKVALSERDLNLPTATRIWPNANWYEREVWDMYGITFTGHPHLTRMLMPPTWQGHPLRKDYPARATEFDPYSLSAAKQDLEQEALRFKPEDWGMKRHGENEDYMFLNLGPNHPSAHGAFRIILQLDGEEIIDCVPEIGYHHRGAEKMAERQSWHSFIPYTDRIDYLGGVMNNLPYVLSVEKLAGIKVPQRVDVIRIMMAEFFRILNHLLYLGTYIQDVGAMTPVFFTFTDRQRAYKVVEAITGFRLHPAWYRIGGVAHDLPRGWDKLVREFLDWMPKRLDEYETAALKNSILRGRTIGVAQYNTKEALEWGTTGAGLRATGCDFDLRKARPYSGYENFEFEVPLAHNGDAYDRCMVKMGEMRQSLRIIEQCLKNMPEGPYKADHPLTTPPPKERTLQHIETLITHFLQVSWGPVMPANEAFQMIEATKGINSYYLTSDGSTMSYRTRIRTPSFAHLQQIPSVINGSMIADLIAYLGSIDFVMADVDR.

The NADH dehydrogenase I subunit C stretch occupies residues Met-1–Gln-184. The interval Asp-208–Arg-593 is NADH dehydrogenase I subunit D.

In the N-terminal section; belongs to the complex I 30 kDa subunit family. It in the C-terminal section; belongs to the complex I 49 kDa subunit family. As to quaternary structure, NDH-1 is composed of 13 different subunits. Subunits NuoB, CD, E, F, and G constitute the peripheral sector of the complex.

It localises to the cell inner membrane. It carries out the reaction a quinone + NADH + 5 H(+)(in) = a quinol + NAD(+) + 4 H(+)(out). Functionally, NDH-1 shuttles electrons from NADH, via FMN and iron-sulfur (Fe-S) centers, to quinones in the respiratory chain. The immediate electron acceptor for the enzyme in this species is believed to be ubiquinone. Couples the redox reaction to proton translocation (for every two electrons transferred, four hydrogen ions are translocated across the cytoplasmic membrane), and thus conserves the redox energy in a proton gradient. The sequence is that of NADH-quinone oxidoreductase subunit C/D from Pseudomonas paraeruginosa (strain DSM 24068 / PA7) (Pseudomonas aeruginosa (strain PA7)).